The sequence spans 439 residues: tRNA modification GTPase MnmE (439 aa).

Residues R26, E88, and R127 each coordinate (6S)-5-formyl-5,6,7,8-tetrahydrofolate. The TrmE-type G domain occupies 220–367 (GARLALIGRP…LRDAIHTALI (148 aa)). N230 serves as a coordination point for K(+). Residues 230 to 235 (NAGKSS), 249 to 255 (TPIPGTT), and 274 to 277 (DTAG) contribute to the GTP site. Mg(2+) is bound at residue S234. Residues T249, I251, and T254 each coordinate K(+). T255 is a binding site for Mg(2+). K439 contributes to the (6S)-5-formyl-5,6,7,8-tetrahydrofolate binding site.

Belongs to the TRAFAC class TrmE-Era-EngA-EngB-Septin-like GTPase superfamily. TrmE GTPase family. Homodimer. Heterotetramer of two MnmE and two MnmG subunits. It depends on K(+) as a cofactor.

The protein localises to the cytoplasm. In terms of biological role, exhibits a very high intrinsic GTPase hydrolysis rate. Involved in the addition of a carboxymethylaminomethyl (cmnm) group at the wobble position (U34) of certain tRNAs, forming tRNA-cmnm(5)s(2)U34. The sequence is that of tRNA modification GTPase MnmE from Deinococcus geothermalis (strain DSM 11300 / CIP 105573 / AG-3a).